A 977-amino-acid polypeptide reads, in one-letter code: uncharacterized protein (977 aa).

Residues 100–152 (ATSPLQQNGKSRDTEKPPSMKEKDLSSNSSSQHDKAFHERVDQGKNKSSTTKY) are disordered. Basic and acidic residues-rich tracts occupy residues 109 to 124 (KSRD…EKDL) and 131 to 144 (QHDK…DQGK). Ser165 is subject to Phosphoserine. 2 stretches are compositionally biased toward polar residues: residues 166 to 175 (PGQSVNSLKP) and 183 to 193 (STKSSTSSEMH). Residues 166–194 (PGQSVNSLKPNSGDEVPSTKSSTSSEMHT) are disordered.

This is an uncharacterized protein from Schizosaccharomyces pombe (strain 972 / ATCC 24843) (Fission yeast).